Reading from the N-terminus, the 378-residue chain is Erythronate-4-phosphate dehydrogenase (378 aa).

2 residues coordinate substrate: S45 and T66. NAD(+) contacts are provided by D146 and T175. R208 is an active-site residue. D232 contacts NAD(+). The active site involves E237. H254 functions as the Proton donor in the catalytic mechanism. G257 is an NAD(+) binding site. Position 258 (Y258) interacts with substrate.

Belongs to the D-isomer specific 2-hydroxyacid dehydrogenase family. PdxB subfamily. As to quaternary structure, homodimer.

It is found in the cytoplasm. The enzyme catalyses 4-phospho-D-erythronate + NAD(+) = (R)-3-hydroxy-2-oxo-4-phosphooxybutanoate + NADH + H(+). The protein operates within cofactor biosynthesis; pyridoxine 5'-phosphate biosynthesis; pyridoxine 5'-phosphate from D-erythrose 4-phosphate: step 2/5. Catalyzes the oxidation of erythronate-4-phosphate to 3-hydroxy-2-oxo-4-phosphonooxybutanoate. The sequence is that of Erythronate-4-phosphate dehydrogenase from Escherichia fergusonii (strain ATCC 35469 / DSM 13698 / CCUG 18766 / IAM 14443 / JCM 21226 / LMG 7866 / NBRC 102419 / NCTC 12128 / CDC 0568-73).